A 474-amino-acid polypeptide reads, in one-letter code: Coiled-coil domain-containing protein 149 (474 aa).

Coiled coils occupy residues 1 to 199 (MANQ…RKNS) and 259 to 286 (IQHQRQTNKILGNRVAELEKKLRTLEVS). Disordered regions lie at residues 301-388 (SDPT…EEEV) and 405-474 (AELE…TVKT). Basic and acidic residues predominate over residues 323-337 (TENKADPKDGEAQKQ). A compositionally biased stretch (low complexity) spans 343–353 (CAAAEALTAPE). The stretch at 385-414 (EEEVNSLGREIIKLTKEQAAAELEEVRRES) forms a coiled coil.

The protein belongs to the CCDC149 family.

This is Coiled-coil domain-containing protein 149 (CCDC149) from Homo sapiens (Human).